Here is an 85-residue protein sequence, read N- to C-terminus: MKLFLLLVISASMLIDGLVNADGYIRGSNGCKVSCLWGNEGCNKECKAFGAYYGYCWTWGLACWCEGLPDDKTWKSESNTCGGKK.

The signal sequence occupies residues 1–21 (MKLFLLLVISASMLIDGLVNA). The 61-residue stretch at 22–82 (DGYIRGSNGC…TWKSESNTCG (61 aa)) folds into the LCN-type CS-alpha/beta domain. Disulfide bonds link Cys31–Cys81, Cys35–Cys56, Cys42–Cys63, and Cys46–Cys65.

The protein belongs to the long (4 C-C) scorpion toxin superfamily. Sodium channel inhibitor family. Beta subfamily. In terms of tissue distribution, expressed by the venom gland.

The protein localises to the secreted. Depressant insect beta-toxins cause a transient contraction paralysis followed by a slow flaccid paralysis. They bind voltage-independently at site-4 of sodium channels (Nav) and shift the voltage of activation toward more negative potentials thereby affecting sodium channel activation and promoting spontaneous and repetitive firing. This toxin is active only on insects. Has potential anti-epilepsy effect. This Olivierus martensii (Manchurian scorpion) protein is Neurotoxin BmKAEP2.